The sequence spans 132 residues: Methenyltetrahydromethanopterin cyclohydrolase (132 aa).

Belongs to the MCH family.

The protein localises to the cytoplasm. It catalyses the reaction 5,10-methenyl-5,6,7,8-tetrahydromethanopterin + H2O = N(5)-formyl-5,6,7,8-tetrahydromethanopterin + H(+). The protein operates within one-carbon metabolism; formaldehyde degradation; formate from formaldehyde (H(4)MPT route): step 3/5. In terms of biological role, catalyzes the hydrolysis of methenyl-H(4)MPT(+) to 5-formyl-H(4)MPT. The polypeptide is Methenyltetrahydromethanopterin cyclohydrolase (mch) (Methylomonas rubra).